The chain runs to 337 residues: uncharacterized protein (337 aa).

The region spanning 279–337 is the AFP-like domain; the sequence is SIVAKRNIKKGEYLSVDNISFKRPGRGIETKYLSIILNRKIKNDKEEDDIIYWDDLLGD.

This sequence to B.subtilis SpsE.

This is an uncharacterized protein from Methanocaldococcus jannaschii (strain ATCC 43067 / DSM 2661 / JAL-1 / JCM 10045 / NBRC 100440) (Methanococcus jannaschii).